Reading from the N-terminus, the 309-residue chain is Dihydroorotate dehydrogenase B (NAD(+)), catalytic subunit (309 aa).

Residues S21 and K45–A46 each bind FMN. Residues K45 and N69 to L73 each bind substrate. Residues N99 and N127 each coordinate FMN. N127 provides a ligand contact to substrate. C130 functions as the Nucleophile in the catalytic mechanism. Residues K165 and I191 each coordinate FMN. N192–T193 serves as a coordination point for substrate. FMN contacts are provided by residues G217, G243 to G244, and G265 to T266.

This sequence belongs to the dihydroorotate dehydrogenase family. Type 1 subfamily. As to quaternary structure, heterotetramer of 2 PyrK and 2 PyrD type B subunits. FMN serves as cofactor.

It is found in the cytoplasm. It catalyses the reaction (S)-dihydroorotate + NAD(+) = orotate + NADH + H(+). It participates in pyrimidine metabolism; UMP biosynthesis via de novo pathway; orotate from (S)-dihydroorotate (NAD(+) route): step 1/1. Functionally, catalyzes the conversion of dihydroorotate to orotate with NAD(+) as electron acceptor. The chain is Dihydroorotate dehydrogenase B (NAD(+)), catalytic subunit (pyrD) from Bacillus cereus (strain AH187).